A 176-amino-acid chain; its full sequence is MARFLLATQATPTISATDANPRTLGDSVSNNKNIASMDTHMVIILAALLCALICALGINSVLRCVLRCTRRFTPNEDPVDTNANVAKGIKKRALKVIPVDSYSPELKMKATECLICLGDFVEGETVRVLPKCNHGFHVKCIDTWLLSHSSCPTCRQSLLEHQTPANGSRRGDDVAT.

Residues 1 to 16 (MARFLLATQATPTISA) form the signal peptide. The chain crosses the membrane as a helical span at residues 42-62 (VIILAALLCALICALGINSVL). The RING-type; atypical zinc-finger motif lies at 113-155 (CLICLGDFVEGETVRVLPKCNHGFHVKCIDTWLLSHSSCPTCR).

It belongs to the RING-type zinc finger family. ATL subfamily.

It localises to the membrane. The enzyme catalyses S-ubiquitinyl-[E2 ubiquitin-conjugating enzyme]-L-cysteine + [acceptor protein]-L-lysine = [E2 ubiquitin-conjugating enzyme]-L-cysteine + N(6)-ubiquitinyl-[acceptor protein]-L-lysine.. It participates in protein modification; protein ubiquitination. The polypeptide is RING-H2 finger protein ATL73 (ATL73) (Arabidopsis thaliana (Mouse-ear cress)).